Here is a 203-residue protein sequence, read N- to C-terminus: Early nodulin-like protein 9 (203 aa).

Residues 1 to 27 (MARNLKSMMLCGFGLLCFLMIVDRAYA) form the signal peptide. A Phytocyanin domain is found at 28–130 (REFTVGGATG…NEKLVVIVMA (103 aa)). Cysteines 84 and 118 form a disulfide. The N-linked (GlcNAc...) asparagine glycan is linked to asparagine 103. Positions 134 to 181 (GNKNTASSPPSPAPAPSGESAPSPPVSGTFEMTPAPTPTTSEDTPNSA) are disordered. Serine 180 carries GPI-anchor amidated serine lipidation. Positions 181-203 (AASSLSFVAALLGAALASTLFLH) are cleaved as a propeptide — removed in mature form.

This sequence belongs to the early nodulin-like (ENODL) family. In terms of tissue distribution, specifically observed at the plasma membrane of sieve elements in vascular tissues of leaves, stems, roots, flowers and reproductive organs. Absent from companion cells.

The protein localises to the cell membrane. Its function is as follows. May act as a carbohydrate transporter. Mainly required for reproductive functions. The polypeptide is Early nodulin-like protein 9 (Arabidopsis thaliana (Mouse-ear cress)).